Here is a 428-residue protein sequence, read N- to C-terminus: 3-phosphoshikimate 1-carboxyvinyltransferase (428 aa).

3-phosphoshikimate is bound by residues lysine 19, serine 20, and arginine 24. Lysine 19 lines the phosphoenolpyruvate pocket. Residues glycine 91 and arginine 119 each coordinate phosphoenolpyruvate. 4 residues coordinate 3-phosphoshikimate: serine 164, glutamine 166, aspartate 312, and lysine 339. Glutamine 166 provides a ligand contact to phosphoenolpyruvate. The active-site Proton acceptor is aspartate 312. Residues arginine 343 and arginine 386 each contribute to the phosphoenolpyruvate site.

Belongs to the EPSP synthase family. As to quaternary structure, monomer.

It is found in the cytoplasm. The enzyme catalyses 3-phosphoshikimate + phosphoenolpyruvate = 5-O-(1-carboxyvinyl)-3-phosphoshikimate + phosphate. The protein operates within metabolic intermediate biosynthesis; chorismate biosynthesis; chorismate from D-erythrose 4-phosphate and phosphoenolpyruvate: step 6/7. Catalyzes the transfer of the enolpyruvyl moiety of phosphoenolpyruvate (PEP) to the 5-hydroxyl of shikimate-3-phosphate (S3P) to produce enolpyruvyl shikimate-3-phosphate and inorganic phosphate. The chain is 3-phosphoshikimate 1-carboxyvinyltransferase from Bacillus subtilis (strain 168).